The primary structure comprises 331 residues: Ribosomal RNA small subunit methyltransferase C (331 aa).

This sequence belongs to the methyltransferase superfamily. RsmC family. Monomer.

The protein resides in the cytoplasm. It catalyses the reaction guanosine(1207) in 16S rRNA + S-adenosyl-L-methionine = N(2)-methylguanosine(1207) in 16S rRNA + S-adenosyl-L-homocysteine + H(+). Its function is as follows. Specifically methylates the guanine in position 1207 of 16S rRNA in the 30S particle. The chain is Ribosomal RNA small subunit methyltransferase C from Ectopseudomonas mendocina (strain ymp) (Pseudomonas mendocina).